A 506-amino-acid polypeptide reads, in one-letter code: GMP synthase [glutamine-hydrolyzing] (506 aa).

One can recognise a Glutamine amidotransferase type-1 domain in the interval 4 to 192 (KLIILDFGSQ…FLDICGMKRD (189 aa)). Residue Cys79 is the Nucleophile of the active site. Catalysis depends on residues His167 and Glu169. Positions 193–381 (WTPASFIEAT…LGMMPHLIHR (189 aa)) constitute a GMPS ATP-PPase domain. 220–226 (SGGVDSS) lines the ATP pocket.

Homodimer.

The catalysed reaction is XMP + L-glutamine + ATP + H2O = GMP + L-glutamate + AMP + diphosphate + 2 H(+). Its pathway is purine metabolism; GMP biosynthesis; GMP from XMP (L-Gln route): step 1/1. Its function is as follows. Catalyzes the synthesis of GMP from XMP. The protein is GMP synthase [glutamine-hydrolyzing] of Porphyromonas gingivalis (strain ATCC BAA-308 / W83).